The following is a 408-amino-acid chain: CinA-like protein (408 aa).

It belongs to the CinA family.

This chain is CinA-like protein, found in Thermotoga neapolitana (strain ATCC 49049 / DSM 4359 / NBRC 107923 / NS-E).